The following is a 187-amino-acid chain: Elongation factor P (187 aa).

This sequence belongs to the elongation factor P family.

Its subcellular location is the cytoplasm. It participates in protein biosynthesis; polypeptide chain elongation. In terms of biological role, involved in peptide bond synthesis. Stimulates efficient translation and peptide-bond synthesis on native or reconstituted 70S ribosomes in vitro. Probably functions indirectly by altering the affinity of the ribosome for aminoacyl-tRNA, thus increasing their reactivity as acceptors for peptidyl transferase. This Corynebacterium aurimucosum (strain ATCC 700975 / DSM 44827 / CIP 107346 / CN-1) (Corynebacterium nigricans) protein is Elongation factor P.